The sequence spans 459 residues: Argininosuccinate lyase (459 aa).

It belongs to the lyase 1 family. Argininosuccinate lyase subfamily.

The protein localises to the cytoplasm. It catalyses the reaction 2-(N(omega)-L-arginino)succinate = fumarate + L-arginine. It functions in the pathway amino-acid biosynthesis; L-arginine biosynthesis; L-arginine from L-ornithine and carbamoyl phosphate: step 3/3. This is Argininosuccinate lyase from Staphylococcus saprophyticus subsp. saprophyticus (strain ATCC 15305 / DSM 20229 / NCIMB 8711 / NCTC 7292 / S-41).